Reading from the N-terminus, the 425-residue chain is Formyl-CoA:oxalate CoA-transferase (425 aa).

Residues 17 to 18 (QS), R38, 72 to 75 (LDTK), 96 to 98 (NFG), R104, and 136 to 139 (KVYE) each bind CoA. D168 serves as the catalytic Nucleophile. 247–249 (GGQ) contributes to the substrate binding site.

Belongs to the CoA-transferase III family. Frc subfamily. In terms of assembly, homodimer.

The catalysed reaction is formyl-CoA + oxalate = oxalyl-CoA + formate. It functions in the pathway metabolic intermediate degradation; oxalate degradation; CO(2) and formate from oxalate: step 1/2. Its function is as follows. Involved in the catabolism of oxalate and in the adapatation to low pH via the induction of the oxalate-dependent acid tolerance response (ATR). Catalyzes the transfer of the CoA moiety from formyl-CoA to oxalate. This Rhodopseudomonas palustris (strain HaA2) protein is Formyl-CoA:oxalate CoA-transferase.